The following is a 175-amino-acid chain: Apoptosis regulatory protein Siva (175 aa).

At tyrosine 34 the chain carries Phosphotyrosine; by ABL2. Residues 36–55 (QEVFEKTKRLLFLGAQAYLD) form an interaction with BCL2L1 isoform Bcl-x(L) and inhibition of BCL2L1 anti-apoptotic activity region. Position 70 is a phosphoserine (serine 70). The interaction with coxsackievirus B3 VP2 stretch occupies residues 105–123 (DPSGVASIACSSCVRAVDG).

As to quaternary structure, binds through its N-terminal region to the C-terminus of CD27 and to PXMP2/PMP22. Binds to the C-terminus of TNFRSF18/GITR. Isoform 1 binds to BCL2L1/BCLX isoform Bcl-x(L) but not to BAX. (Microbial infection) Interacts with coxsackievirus B3 capsid protein VP2; this interaction inhibits the binding of SIVA1 to CD27. The cofactor is Zn(2+). In terms of processing, phosphorylated by ABL2/ARG in response to oxidative stress. As to expression, ubiquitous. Mostly expressed in thymus, testis, ovary, prostate, small intestine and spleen and less in colon.

The protein resides in the cytoplasm. It is found in the nucleus. In terms of biological role, induces CD27-mediated apoptosis. Inhibits BCL2L1 isoform Bcl-x(L) anti-apoptotic activity. Inhibits activation of NF-kappa-B and promotes T-cell receptor-mediated apoptosis. The protein is Apoptosis regulatory protein Siva (SIVA1) of Homo sapiens (Human).